The primary structure comprises 1281 residues: Angiotensin-converting enzyme (1281 aa).

The N-terminal stretch at 1 to 17 (MPAALGLLLPWLSLVGA) is a signal peptide. Residues 18 to 1241 (LQPGLEPPQS…MSVGTKQATA (1224 aa)) are Extracellular-facing. Peptidase M2 domains are found at residues 28–610 (DPTE…LGWP) and 629–1208 (IVDE…LGWP). N-linked (GlcNAc...) asparagine glycosylation is found at Asn42, Asn62, Asn80, Asn99, and Asn148. A disulfide bond links Cys145 and Cys151. Tyr217 serves as a coordination point for chloride. A glycan (N-linked (GlcNAc...) asparagine) is linked at Asn304. The cysteines at positions 345 and 363 are disulfide-linked. His376 provides a ligand contact to Zn(2+). Catalysis depends on Glu377, which acts as the Proton acceptor 1. Zn(2+) contacts are provided by His380 and Glu404. Asn495 is a glycosylation site (N-linked (GlcNAc...) asparagine). The active-site Proton donor 1 is His506. Arg515 contributes to the chloride binding site. The cysteines at positions 531 and 543 are disulfide-linked. N-linked (GlcNAc...) asparagine glycosylation is found at Asn535, Asn573, Asn601, Asn643, Asn663, and Asn746. A disulfide bridge links Cys743 with Cys749. Chloride contacts are provided by Arg777 and Tyr815. A disulfide bond links Cys943 and Cys961. His974 is a binding site for Zn(2+). Glu975 serves as the catalytic Proton acceptor 2. 2 residues coordinate Zn(2+): His978 and Glu1002. Chloride-binding residues include Trp1076 and Arg1080. Catalysis depends on His1104, which acts as the Proton donor 2. Arg1113 is a chloride binding site. Cys1129 and Cys1141 form a disulfide bridge. Asn1177 carries an N-linked (GlcNAc...) asparagine glycan. The juxtamembrane stalk stretch occupies residues 1201–1240 (NGEVLGWPEYSWTPYAVTEFHAATDTADFLGMSVGTKQAT). A helical transmembrane segment spans residues 1242-1262 (GAWVLLALALVFLITSIFLGV). At 1263 to 1281 (KLFSSRRKAFKSSSEMELK) the chain is on the cytoplasmic side.

It belongs to the peptidase M2 family. The cofactor is Zn(2+). Chloride serves as cofactor.

It localises to the cell membrane. The protein resides in the cytoplasm. The enzyme catalyses Release of a C-terminal dipeptide, oligopeptide-|-Xaa-Yaa, when Xaa is not Pro, and Yaa is neither Asp nor Glu. Thus, conversion of angiotensin I to angiotensin II, with increase in vasoconstrictor activity, but no action on angiotensin II.. The catalysed reaction is angiotensin I + H2O = L-histidyl-L-leucine + angiotensin II. It carries out the reaction bradykinin + H2O = L-Phe-L-Arg + bradykinin(1-7). It catalyses the reaction substance P + H2O = substance P(1-9) + L-Leu-L-Met-NH2. The enzyme catalyses substance P + H2O = substance P(1-8) + Gly-L-Leu-L-Met-NH2. The catalysed reaction is substance P + H2O = L-Phe-L-Phe-Gly-L-Leu-L-Met-NH2 + substance P(1-6). It carries out the reaction neurotensin + H2O = neurotensin(1-11) + L-isoleucyl-L-leucine. It catalyses the reaction goralatide + H2O = N-acetyl-L-seryl-L-aspartate + L-lysyl-L-proline. The enzyme catalyses Met-enkephalin + H2O = L-phenylalanyl-L-methionine + L-tyrosylglycylglycine. The catalysed reaction is Leu-enkephalin + H2O = L-tyrosylglycylglycine + L-phenylalanyl-L-leucine. It carries out the reaction Met-enkephalin-Arg-Phe + H2O = L-arginyl-L-phenylalanine + Met-enkephalin. Its function is as follows. Dipeptidyl carboxypeptidase that removes dipeptides from the C-terminus of a variety of circulating hormones, such as angiotensin I, bradykinin or enkephalins, thereby playing a key role in the regulation of blood pressure, electrolyte homeostasis or synaptic plasticity. Composed of two similar catalytic domains, each possessing a functional active site, with different selectivity for substrates. Plays a major role in the angiotensin-renin system that regulates blood pressure and sodium retention by the kidney by converting angiotensin I to angiotensin II, resulting in an increase of the vasoconstrictor activity of angiotensin. Also able to inactivate bradykinin, a potent vasodilator, and therefore enhance the blood pressure response. Acts as a regulator of synaptic transmission by mediating cleavage of neuropeptide hormones, such as substance P, neurotensin or enkephalins. Catalyzes degradation of different enkephalin neuropeptides (Met-enkephalin, Leu-enkephalin, Met-enkephalin-Arg-Phe and possibly Met-enkephalin-Arg-Gly-Leu). Also acts as a regulator of hematopoietic stem cell differentiation by mediating degradation of hemoregulatory peptide N-acetyl-SDKP (AcSDKP). This chain is Angiotensin-converting enzyme, found in Gallus gallus (Chicken).